A 448-amino-acid chain; its full sequence is Beta-glucosidase B (448 aa).

Glu-167 (proton donor) is an active-site residue. The active-site Nucleophile is the Glu-356.

The protein belongs to the glycosyl hydrolase 1 family.

It carries out the reaction Hydrolysis of terminal, non-reducing beta-D-glucosyl residues with release of beta-D-glucose.. This is Beta-glucosidase B (bglB) from Paenibacillus polymyxa (Bacillus polymyxa).